Reading from the N-terminus, the 451-residue chain is Phenolic glucoside malonyltransferase 2 (451 aa).

H165 acts as the Proton acceptor in catalysis. An HXXXD motif motif is present at residues H165–D169. Malonyl-CoA is bound by residues H270 and S272–T273. The Proton acceptor role is filled by D395. The short motif at D395–G399 is the DFGWG motif element.

This sequence belongs to the plant acyltransferase family. Phenolic glucoside malonyltransferase subfamily.

The enzyme catalyses a flavonol 7-O-beta-D-glucoside + malonyl-CoA = a flavonol 7-O-(6-O-malonyl-beta-D-glucoside) + CoA. Its function is as follows. Malonyltransferase acting on xenobiotic glucosides. Has activity toward 2-Naphthol glucoside (2NAG), 1-Naphthol glucoside (1NAG), kaempferol 7-O-glucoside, hydroxycoumarin glucosides and phenol-glucosides, but not toward kaempferol 3-O-glucoside or daidzin. Prefers phenol glucosides rather than naphtol glucosides. In vivo, seems to be involved in the malonylation of 4-methylumbelliferone glucoside or 4-nitrophenyl glucoside while PMAT1 would be involved in the malonylation of 2-Naphthol glucoside. This Arabidopsis thaliana (Mouse-ear cress) protein is Phenolic glucoside malonyltransferase 2 (PMAT2).